A 135-amino-acid chain; its full sequence is Holo-[acyl-carrier-protein] synthase (135 aa).

2 residues coordinate Mg(2+): Asp-8 and Glu-57.

Belongs to the P-Pant transferase superfamily. AcpS family. It depends on Mg(2+) as a cofactor.

It is found in the cytoplasm. The enzyme catalyses apo-[ACP] + CoA = holo-[ACP] + adenosine 3',5'-bisphosphate + H(+). Functionally, transfers the 4'-phosphopantetheine moiety from coenzyme A to a Ser of acyl-carrier-protein. The sequence is that of Holo-[acyl-carrier-protein] synthase from Methylobacterium sp. (strain 4-46).